We begin with the raw amino-acid sequence, 117 residues long: MARVTVEDCVDKVPNRFELVMLAAHRAREIASGSALTIDRDNDKNPVVALREIAEETQSAESLRERMIESHQTQIEVDEPEEDQMALLMGSEVDRPVQDDMSEEKLLRALMEAQGQN.

The protein belongs to the RNA polymerase subunit omega family. The RNAP catalytic core consists of 2 alpha, 1 beta, 1 beta' and 1 omega subunit. When a sigma factor is associated with the core the holoenzyme is formed, which can initiate transcription.

The catalysed reaction is RNA(n) + a ribonucleoside 5'-triphosphate = RNA(n+1) + diphosphate. Promotes RNA polymerase assembly. Latches the N- and C-terminal regions of the beta' subunit thereby facilitating its interaction with the beta and alpha subunits. The polypeptide is DNA-directed RNA polymerase subunit omega (Cereibacter sphaeroides (strain ATCC 17025 / ATH 2.4.3) (Rhodobacter sphaeroides)).